Here is a 119-residue protein sequence, read N- to C-terminus: Large ribosomal subunit protein bL19c (119 aa).

It belongs to the bacterial ribosomal protein bL19 family.

The protein resides in the plastid. It localises to the chloroplast. This Mesostigma viride (Green alga) protein is Large ribosomal subunit protein bL19c.